The sequence spans 417 residues: Serine hydroxymethyltransferase (417 aa).

(6S)-5,6,7,8-tetrahydrofolate contacts are provided by residues L121 and 125 to 127 (GHL). K229 bears the N6-(pyridoxal phosphate)lysine mark. 355 to 357 (SPF) contacts (6S)-5,6,7,8-tetrahydrofolate.

This sequence belongs to the SHMT family. In terms of assembly, homodimer. It depends on pyridoxal 5'-phosphate as a cofactor.

The protein resides in the cytoplasm. The enzyme catalyses (6R)-5,10-methylene-5,6,7,8-tetrahydrofolate + glycine + H2O = (6S)-5,6,7,8-tetrahydrofolate + L-serine. The protein operates within one-carbon metabolism; tetrahydrofolate interconversion. It participates in amino-acid biosynthesis; glycine biosynthesis; glycine from L-serine: step 1/1. In terms of biological role, catalyzes the reversible interconversion of serine and glycine with tetrahydrofolate (THF) serving as the one-carbon carrier. This reaction serves as the major source of one-carbon groups required for the biosynthesis of purines, thymidylate, methionine, and other important biomolecules. Also exhibits THF-independent aldolase activity toward beta-hydroxyamino acids, producing glycine and aldehydes, via a retro-aldol mechanism. The sequence is that of Serine hydroxymethyltransferase from Stenotrophomonas maltophilia (strain K279a).